A 251-amino-acid chain; its full sequence is Ribosome maturation factor RimP (251 aa).

Residues 198-251 (NLGLEPPAAPHAKISEKTTKNTKPKKKPAPTNTKKHRLAAERARRGEIEPDEGD) are disordered. Basic residues predominate over residues 217 to 234 (KNTKPKKKPAPTNTKKHR). Basic and acidic residues predominate over residues 235-245 (LAAERARRGEI).

This sequence belongs to the RimP family.

The protein localises to the cytoplasm. Functionally, required for maturation of 30S ribosomal subunits. The protein is Ribosome maturation factor RimP of Bradyrhizobium diazoefficiens (strain JCM 10833 / BCRC 13528 / IAM 13628 / NBRC 14792 / USDA 110).